Here is a 63-residue protein sequence, read N- to C-terminus: Potassium channel toxin MeuTXKalpha4 (63 aa).

Residues 1-28 (MSRLLIFILTAVVLSVIIDILNNSKVEG) form the signal peptide. Disulfide bonds link C35–C53, C39–C59, and C43–C61.

It belongs to the short scorpion toxin superfamily. Potassium channel inhibitor family. Expressed by the venom gland.

The protein localises to the secreted. Functionally, may block voltage-gated potassium channels (Kv). This chain is Potassium channel toxin MeuTXKalpha4, found in Mesobuthus eupeus (Lesser Asian scorpion).